The primary structure comprises 35 residues: Potassium channel toxin alpha-KTx 6.12 (35 aa).

At Gln-1 the chain carries Pyrrolidone carboxylic acid. Cystine bridges form between Cys-4/Cys-24, Cys-10/Cys-29, Cys-14/Cys-31, and Cys-19/Cys-34. At Lys-35 the chain carries Lysine amide.

Belongs to the short scorpion toxin superfamily. Potassium channel inhibitor family. Alpha-KTx 06 subfamily. As to quaternary structure, monomer. In terms of tissue distribution, expressed by the venom gland.

Its subcellular location is the secreted. High affinity blocker of Kv1.3/KCNA3 channels of human T cells. Blocks Kv1.2/KCNA2 with an order of magnitude smaller than for Kv1.3/KCNA3. The polypeptide is Potassium channel toxin alpha-KTx 6.12 (Anuroctonus phaiodactylus (Mafia scorpion)).